The chain runs to 474 residues: Bifunctional protein HldE (474 aa).

Residues 1–318 form a ribokinase region; the sequence is MKVTLPDFNK…ENAIRGRADN (318 aa). 195–198 lines the ATP pocket; sequence NMSE. D264 is an active-site residue. Positions 344-474 are cytidylyltransferase; the sequence is MTNGCFDILH…TNIINAIKKK (131 aa).

In the N-terminal section; belongs to the carbohydrate kinase PfkB family. It in the C-terminal section; belongs to the cytidylyltransferase family. Homodimer.

The enzyme catalyses D-glycero-beta-D-manno-heptose 7-phosphate + ATP = D-glycero-beta-D-manno-heptose 1,7-bisphosphate + ADP + H(+). It catalyses the reaction D-glycero-beta-D-manno-heptose 1-phosphate + ATP + H(+) = ADP-D-glycero-beta-D-manno-heptose + diphosphate. It participates in nucleotide-sugar biosynthesis; ADP-L-glycero-beta-D-manno-heptose biosynthesis; ADP-L-glycero-beta-D-manno-heptose from D-glycero-beta-D-manno-heptose 7-phosphate: step 1/4. The protein operates within nucleotide-sugar biosynthesis; ADP-L-glycero-beta-D-manno-heptose biosynthesis; ADP-L-glycero-beta-D-manno-heptose from D-glycero-beta-D-manno-heptose 7-phosphate: step 3/4. Catalyzes the phosphorylation of D-glycero-D-manno-heptose 7-phosphate at the C-1 position to selectively form D-glycero-beta-D-manno-heptose-1,7-bisphosphate. In terms of biological role, catalyzes the ADP transfer from ATP to D-glycero-beta-D-manno-heptose 1-phosphate, yielding ADP-D-glycero-beta-D-manno-heptose. This is Bifunctional protein HldE from Proteus mirabilis (strain HI4320).